The chain runs to 717 residues: Fatty acid oxidation complex subunit alpha (717 aa).

Residues 1–189 (MIYQSPTIEV…KVGAIDAVVA (189 aa)) form an enoyl-CoA hydratase/isomerase region. Asp296 contributes to the substrate binding site. The 3-hydroxyacyl-CoA dehydrogenase stretch occupies residues 311–717 (KKVNSAAVLG…ANNGSYYQQA (407 aa)). Residues Met324, Asp343, 400-402 (VVE), Lys407, and Ser429 contribute to the NAD(+) site. His450 (for 3-hydroxyacyl-CoA dehydrogenase activity) is an active-site residue. Residue Asn453 coordinates NAD(+). Substrate is bound by residues Asn500 and Tyr660.

The protein in the N-terminal section; belongs to the enoyl-CoA hydratase/isomerase family. In the C-terminal section; belongs to the 3-hydroxyacyl-CoA dehydrogenase family. As to quaternary structure, heterotetramer of two alpha chains (FadB) and two beta chains (FadA).

It carries out the reaction a (3S)-3-hydroxyacyl-CoA + NAD(+) = a 3-oxoacyl-CoA + NADH + H(+). It catalyses the reaction a (3S)-3-hydroxyacyl-CoA = a (2E)-enoyl-CoA + H2O. The enzyme catalyses a 4-saturated-(3S)-3-hydroxyacyl-CoA = a (3E)-enoyl-CoA + H2O. The catalysed reaction is (3S)-3-hydroxybutanoyl-CoA = (3R)-3-hydroxybutanoyl-CoA. It carries out the reaction a (3Z)-enoyl-CoA = a 4-saturated (2E)-enoyl-CoA. It catalyses the reaction a (3E)-enoyl-CoA = a 4-saturated (2E)-enoyl-CoA. It participates in lipid metabolism; fatty acid beta-oxidation. Its function is as follows. Involved in the aerobic and anaerobic degradation of long-chain fatty acids via beta-oxidation cycle. Catalyzes the formation of 3-oxoacyl-CoA from enoyl-CoA via L-3-hydroxyacyl-CoA. It can also use D-3-hydroxyacyl-CoA and cis-3-enoyl-CoA as substrate. The chain is Fatty acid oxidation complex subunit alpha from Shewanella pealeana (strain ATCC 700345 / ANG-SQ1).